The primary structure comprises 654 residues: MTMSQSQTKKGRIIGIDLGTTNSCVAVMEGGAPKVIASAEGTRTTPSVVAYKGNERLVGIPAKRQAVTNPENTITSSKRFIGRKYQEVLSEIKTVPYKVTNNNNGDAVFEIQGKIVTPEEIAAQILIKMKETAEAYLGEKITEAVITVPAYFNDSQRQSTKDAGRIAGLDVKRIIPEPTAAALAYGLDKENADKKIAVFDLGGGTFDISVLEIGDGVFEVLSTSGDTHLGGDDFDNAILNWMLETFKQEQGIDLRNDKMALQRLRDAAEKAKIELSGVQQTEINQPFITMDASGPKHLTMTLTRSKLESLTHDLIERTREPCLKALKDSGLNKDDISEVILVGGMSRMPAVQEVVKSIFGKEGHKGVNPDEVVAVGAAIQGGVLTGVVKDVLLLDVTPLTLGIETLGGVMTPLVERNTTIPTQKKQIFSTAADNQPAVTIRVLQGERKMANDNKEIGRFDLADIPPSPRGTPQIEVAFDIDADGILHVSAKDLSSGKEQKIRIEAQSGLQEEEIKRMVRDAEEHAEEDKKRKEEVEIRNEADSLAFRAQKALDEYKDKVPQQIADDISNKIEAVKKALETTDIARIRSAKDELERQMQQIGEVMSKAAGQSETQSTGPGSYQESSNQSSQHQTNNNKPDDIEEAEVEILDDKKP.

Position 205 is a phosphothreonine; by autocatalysis (Thr205). Positions 592–654 are disordered; sequence ELERQMQQIG…EVEILDDKKP (63 aa). The span at 608-621 shows a compositional bias: polar residues; that stretch reads AGQSETQSTGPGSY. Over residues 622–636 the composition is skewed to low complexity; that stretch reads QESSNQSSQHQTNNN.

This sequence belongs to the heat shock protein 70 family.

Acts as a chaperone. The sequence is that of Chaperone protein DnaK from Protochlamydia amoebophila (strain UWE25).